Reading from the N-terminus, the 166-residue chain is MAKSIIIQAPALCFLSLLGFAYSESRFFVEGKVYCDNCRTQFVTKLSTYMKGAKVSLECRNREGGTLIYSSDSETDKSGTYRIPVDGDHEEEICEIALKKSSDPDCSEVSKDPFLKKSARISLTKNNGISTPVRLANPLGFMKKKPLPECAKALRELGMNPDDVIQ.

Residues 1 to 23 (MAKSIIIQAPALCFLSLLGFAYS) form the signal peptide. 3 disulfide bridges follow: C35–C106, C38–C150, and C59–C94.

Belongs to the Ole e I family.

The protein resides in the secreted. This Betula pendula (European white birch) protein is Olee1-like protein.